We begin with the raw amino-acid sequence, 243 residues long: Triosephosphate isomerase (243 aa).

Position 9-11 (9-11 (NWK)) interacts with substrate. The active-site Electrophile is the His96. Glu165 (proton acceptor) is an active-site residue. Residues Gly171, Ser204, and 225 to 226 (GG) contribute to the substrate site.

The protein belongs to the triosephosphate isomerase family. As to quaternary structure, homodimer.

It localises to the cytoplasm. The catalysed reaction is D-glyceraldehyde 3-phosphate = dihydroxyacetone phosphate. It participates in carbohydrate biosynthesis; gluconeogenesis. Its pathway is carbohydrate degradation; glycolysis; D-glyceraldehyde 3-phosphate from glycerone phosphate: step 1/1. Its function is as follows. Involved in the gluconeogenesis. Catalyzes stereospecifically the conversion of dihydroxyacetone phosphate (DHAP) to D-glyceraldehyde-3-phosphate (G3P). The polypeptide is Triosephosphate isomerase (Nostoc punctiforme (strain ATCC 29133 / PCC 73102)).